Reading from the N-terminus, the 691-residue chain is Probable E3 ubiquitin-protein ligase RHG1A (691 aa).

5 disordered regions span residues 71–91 (SLGE…NEQR), 151–235 (GPGT…PRGM), 316–336 (SFVV…GSRT), 349–373 (VGGT…SRSI), and 395–501 (QSSR…MHNR). Over residues 80-91 (TKDEASSHNEQR) the composition is skewed to basic and acidic residues. 2 stretches are compositionally biased toward polar residues: residues 204–213 (GESSSWTPGS) and 317–328 (FVVSRNPNSTPV). Positions 361 to 370 (RNLHLDETRS) are enriched in basic and acidic residues. Residues 395 to 406 (QSSRNVTNGNLN) show a composition bias toward polar residues. Positions 407–419 (SASSVSRTGSTTS) are enriched in low complexity. Over residues 429–440 (NLAWTSYQNSPH) the composition is skewed to polar residues. Positions 454–465 (RSLLSSLAADAT) are enriched in low complexity. The segment at 637-678 (CCVCQEEYTEGEDMGTLECGHEFHSQCIKEWLKQKNLCPICK) adopts an RING-type; atypical zinc-finger fold.

As to expression, expressed in stems, flowers, green siliques, cauline leaves, seeds and roots.

It catalyses the reaction S-ubiquitinyl-[E2 ubiquitin-conjugating enzyme]-L-cysteine + [acceptor protein]-L-lysine = [E2 ubiquitin-conjugating enzyme]-L-cysteine + N(6)-ubiquitinyl-[acceptor protein]-L-lysine.. The protein operates within protein modification; protein ubiquitination. Probable E3 ubiquitin-protein ligase that may possess E3 ubiquitin ligase activity in vitro. The chain is Probable E3 ubiquitin-protein ligase RHG1A from Arabidopsis thaliana (Mouse-ear cress).